Reading from the N-terminus, the 437-residue chain is Eukaryotic peptide chain release factor subunit 1 (437 aa).

Positions N61–S64 match the NIKS motif; plays an important role in translational termination motif.

It belongs to the eukaryotic release factor 1 family. As to quaternary structure, component of the eRF1-eRF3-GTP ternary complex, composed of ETF1/ERF1 and eRF3 (GSPT1/ERF3A or GSPT2/ERF3B) and GTP.

The protein localises to the cytoplasm. In terms of biological role, component of the eRF1-eRF3-GTP ternary complex, a ternary complex that mediates translation termination in response to the termination codons. The eRF1-eRF3-GTP complex binds to a stop codon in the ribosomal A-site. ETF1/ERF1 is responsible for stop codon recognition and inducing hydrolysis of peptidyl-tRNA. Following GTP hydrolysis, eRF3 (GSPT1/ERF3A or GSPT2/ERF3B) dissociates, permitting ETF1/eRF1 to accommodate fully in the A-site, followed by hydrolysis of peptidyl-tRNA. This is Eukaryotic peptide chain release factor subunit 1 (etf1) from Xenopus tropicalis (Western clawed frog).